The chain runs to 475 residues: Bifunctional protein HldE (475 aa).

The tract at residues 1–318 (MMQYSLKFNQ…ENAIHHREET (318 aa)) is ribokinase. Position 195-198 (195-198 (NMAE)) interacts with ATP. Residue Asp-264 is part of the active site. Residues 344 to 475 (MTNGCFDILH…DVIKKIQAIR (132 aa)) are cytidylyltransferase.

The protein in the N-terminal section; belongs to the carbohydrate kinase PfkB family. It in the C-terminal section; belongs to the cytidylyltransferase family. Homodimer.

The catalysed reaction is D-glycero-beta-D-manno-heptose 7-phosphate + ATP = D-glycero-beta-D-manno-heptose 1,7-bisphosphate + ADP + H(+). It carries out the reaction D-glycero-beta-D-manno-heptose 1-phosphate + ATP + H(+) = ADP-D-glycero-beta-D-manno-heptose + diphosphate. Its pathway is nucleotide-sugar biosynthesis; ADP-L-glycero-beta-D-manno-heptose biosynthesis; ADP-L-glycero-beta-D-manno-heptose from D-glycero-beta-D-manno-heptose 7-phosphate: step 1/4. It participates in nucleotide-sugar biosynthesis; ADP-L-glycero-beta-D-manno-heptose biosynthesis; ADP-L-glycero-beta-D-manno-heptose from D-glycero-beta-D-manno-heptose 7-phosphate: step 3/4. It functions in the pathway bacterial outer membrane biogenesis; LOS core biosynthesis. In terms of biological role, catalyzes the phosphorylation of D-glycero-D-manno-heptose 7-phosphate at the C-1 position to selectively form D-glycero-beta-D-manno-heptose-1,7-bisphosphate. Functionally, catalyzes the ADP transfer from ATP to D-glycero-beta-D-manno-heptose 1-phosphate, yielding ADP-D-glycero-beta-D-manno-heptose. This chain is Bifunctional protein HldE, found in Haemophilus ducreyi (strain 35000HP / ATCC 700724).